The following is a 297-amino-acid chain: UDP-N-acetylenolpyruvoylglucosamine reductase (297 aa).

One can recognise an FAD-binding PCMH-type domain in the interval 26–191; sequence QTGGPAEYLA…IAATFALKAG (166 aa). Residue Arg-170 is part of the active site. Catalysis depends on Ser-220, which acts as the Proton donor. Residue Glu-290 is part of the active site.

Belongs to the MurB family. It depends on FAD as a cofactor.

The protein localises to the cytoplasm. It catalyses the reaction UDP-N-acetyl-alpha-D-muramate + NADP(+) = UDP-N-acetyl-3-O-(1-carboxyvinyl)-alpha-D-glucosamine + NADPH + H(+). Its pathway is cell wall biogenesis; peptidoglycan biosynthesis. Its function is as follows. Cell wall formation. This is UDP-N-acetylenolpyruvoylglucosamine reductase from Lactobacillus delbrueckii subsp. bulgaricus (strain ATCC 11842 / DSM 20081 / BCRC 10696 / JCM 1002 / NBRC 13953 / NCIMB 11778 / NCTC 12712 / WDCM 00102 / Lb 14).